Here is a 461-residue protein sequence, read N- to C-terminus: Tubulin gamma-2 chain (461 aa).

142-148 is a GTP binding site; the sequence is AGGTGSG.

This sequence belongs to the tubulin family.

The protein resides in the cytoplasm. Its subcellular location is the cytoskeleton. It is found in the microtubule organizing center. It localises to the centrosome. Tubulin is the major constituent of microtubules. The gamma chain is found at microtubule organizing centers (MTOC) such as the spindle poles or the centrosome, suggesting that it is involved in the minus-end nucleation of microtubule assembly. This Euplotoides octocarinatus (Freshwater ciliate) protein is Tubulin gamma-2 chain.